The sequence spans 316 residues: UPF0725 protein At1g02770 (316 aa).

It belongs to the UPF0725 (EMB2204) family.

The sequence is that of UPF0725 protein At1g02770 from Arabidopsis thaliana (Mouse-ear cress).